The sequence spans 572 residues: Methionine--tRNA ligase (572 aa).

The 'HIGH' region signature appears at 11–21 (PYINGIKHLGN). Residues Cys-143, Cys-146, Cys-156, and Cys-159 each coordinate Zn(2+). The short motif at 346 to 350 (QFSTS) is the 'KMSKS' region element. Thr-349 is a binding site for ATP.

Belongs to the class-I aminoacyl-tRNA synthetase family. MetG type 1 subfamily. In terms of assembly, monomer. Zn(2+) is required as a cofactor.

The protein resides in the cytoplasm. It carries out the reaction tRNA(Met) + L-methionine + ATP = L-methionyl-tRNA(Met) + AMP + diphosphate. Its function is as follows. Is required not only for elongation of protein synthesis but also for the initiation of all mRNA translation through initiator tRNA(fMet) aminoacylation. The polypeptide is Methionine--tRNA ligase (Dinoroseobacter shibae (strain DSM 16493 / NCIMB 14021 / DFL 12)).